The sequence spans 172 residues: L-2,4-diaminobutyric acid acetyltransferase (172 aa).

Residues 15–166 form the N-acetyltransferase domain; sequence IVFDKPTVED…DEHEEELTFR (152 aa).

It belongs to the acetyltransferase family. EctA subfamily.

It catalyses the reaction L-2,4-diaminobutanoate + acetyl-CoA = (2S)-4-acetamido-2-aminobutanoate + CoA + H(+). It functions in the pathway amine and polyamine biosynthesis; ectoine biosynthesis; L-ectoine from L-aspartate 4-semialdehyde: step 2/3. Its function is as follows. Catalyzes the acetylation of L-2,4-diaminobutyrate (DABA) to gamma-N-acetyl-alpha,gamma-diaminobutyric acid (ADABA) with acetyl coenzyme A. This is L-2,4-diaminobutyric acid acetyltransferase (ectA) from Marinococcus halophilus.